The following is a 373-amino-acid chain: 4-hydroxy-3-methylbut-2-en-1-yl diphosphate synthase (flavodoxin) (373 aa).

[4Fe-4S] cluster contacts are provided by cysteine 268, cysteine 271, cysteine 303, and glutamate 310.

The protein belongs to the IspG family. [4Fe-4S] cluster is required as a cofactor.

It catalyses the reaction (2E)-4-hydroxy-3-methylbut-2-enyl diphosphate + oxidized [flavodoxin] + H2O + 2 H(+) = 2-C-methyl-D-erythritol 2,4-cyclic diphosphate + reduced [flavodoxin]. It participates in isoprenoid biosynthesis; isopentenyl diphosphate biosynthesis via DXP pathway; isopentenyl diphosphate from 1-deoxy-D-xylulose 5-phosphate: step 5/6. In terms of biological role, converts 2C-methyl-D-erythritol 2,4-cyclodiphosphate (ME-2,4cPP) into 1-hydroxy-2-methyl-2-(E)-butenyl 4-diphosphate. This Exiguobacterium sp. (strain ATCC BAA-1283 / AT1b) protein is 4-hydroxy-3-methylbut-2-en-1-yl diphosphate synthase (flavodoxin).